Here is a 670-residue protein sequence, read N- to C-terminus: Soluble lamin-associated protein of 75 kDa (670 aa).

Disordered regions lie at residues 273-301 (PKRP…SSEM) and 314-670 (STSE…AKLT). Serine 350 bears the Phosphoserine mark. Positions 358–375 (SQTSLTASINKLESTARP) are enriched in polar residues. Positions 378–387 (SSEEFLEEEP) are enriched in acidic residues. The residue at position 379 (serine 379) is a Phosphoserine. Positions 414-423 (EKQDGEKESE) are enriched in basic and acidic residues. The segment covering 442–453 (TEEEDSTSEVLD) has biased composition (acidic residues). Phosphoserine is present on serine 449. Over residues 460 to 470 (PFNSSEDSTNL) the composition is skewed to polar residues. Basic and acidic residues-rich tracts occupy residues 479-494 (KPPE…RIPD) and 504-514 (SDEKGHMEEKL). Serine 515 carries the post-translational modification Phosphoserine. Polar residues-rich tracts occupy residues 558–569 (ENLSPNTTSSLE) and 579–591 (PQET…QSSL). Phosphoserine is present on residues serine 615, serine 618, and serine 635. The segment covering 651–670 (NLRRKAKGHKGPAKKKAKLT) has biased composition (basic residues).

Belongs to the FAM169 family.

It localises to the nucleus envelope. The protein localises to the nucleus inner membrane. The chain is Soluble lamin-associated protein of 75 kDa (FAM169A) from Homo sapiens (Human).